Here is a 627-residue protein sequence, read N- to C-terminus: tRNA uridine 5-carboxymethylaminomethyl modification enzyme MnmG (627 aa).

Residues 13 to 18 (GGGHAG), Val125, and Ser180 contribute to the FAD site. Residue 274-288 (GPRYCPSIEDKVVRF) coordinates NAD(+). Gln371 serves as a coordination point for FAD.

Belongs to the MnmG family. Homodimer. Heterotetramer of two MnmE and two MnmG subunits. The cofactor is FAD.

Its subcellular location is the cytoplasm. Functionally, NAD-binding protein involved in the addition of a carboxymethylaminomethyl (cmnm) group at the wobble position (U34) of certain tRNAs, forming tRNA-cmnm(5)s(2)U34. In Francisella tularensis subsp. holarctica (strain FTNF002-00 / FTA), this protein is tRNA uridine 5-carboxymethylaminomethyl modification enzyme MnmG.